Here is a 189-residue protein sequence, read N- to C-terminus: Cytidylate kinase (189 aa).

Residue 7–15 (GPPGSGKTS) coordinates ATP.

This sequence belongs to the cytidylate kinase family. Type 2 subfamily.

The protein resides in the cytoplasm. It catalyses the reaction CMP + ATP = CDP + ADP. It carries out the reaction dCMP + ATP = dCDP + ADP. This Saccharolobus islandicus (strain Y.N.15.51 / Yellowstone #2) (Sulfolobus islandicus) protein is Cytidylate kinase.